The chain runs to 763 residues: Thiamine biosynthesis multifunctional protein ThiED (763 aa).

The interval 1 to 210 (MTDFSLYLVT…ANPAAAATRL (210 aa)) is thiamine-phosphate synthase. 4-amino-2-methyl-5-(diphosphooxymethyl)pyrimidine-binding positions include 37–41 (QLRDK) and asparagine 69. 2 residues coordinate Mg(2+): aspartate 70 and aspartate 88. Serine 107 lines the 4-amino-2-methyl-5-(diphosphooxymethyl)pyrimidine pocket. 2-[(2R,5Z)-2-carboxy-4-methylthiazol-5(2H)-ylidene]ethyl phosphate is bound at residue 140 to 142 (TAT). Position 143 (lysine 143) interacts with 4-amino-2-methyl-5-(diphosphooxymethyl)pyrimidine. Residues glycine 174 and 194 to 195 (VS) each bind 2-[(2R,5Z)-2-carboxy-4-methylthiazol-5(2H)-ylidene]ethyl phosphate. The interval 245–500 (LSIAGTDPTG…GTGNGPVDHG (256 aa)) is hydroxymethylpyrimidine/phosphomethylpyrimidine kinase. Glutamine 282 provides a ligand contact to 4-amino-5-hydroxymethyl-2-methylpyrimidine. Positions 550–763 (FTRALWEASG…RHGWTMVGSS (214 aa)) are thiaminase-2.

This sequence in the N-terminal section; belongs to the thiamine-phosphate synthase family. The protein in the central section; belongs to the ThiD family. It in the C-terminal section; belongs to the thiaminase-2 family. It depends on Mg(2+) as a cofactor.

It carries out the reaction 2-[(2R,5Z)-2-carboxy-4-methylthiazol-5(2H)-ylidene]ethyl phosphate + 4-amino-2-methyl-5-(diphosphooxymethyl)pyrimidine + 2 H(+) = thiamine phosphate + CO2 + diphosphate. It catalyses the reaction 2-(2-carboxy-4-methylthiazol-5-yl)ethyl phosphate + 4-amino-2-methyl-5-(diphosphooxymethyl)pyrimidine + 2 H(+) = thiamine phosphate + CO2 + diphosphate. The enzyme catalyses 4-methyl-5-(2-phosphooxyethyl)-thiazole + 4-amino-2-methyl-5-(diphosphooxymethyl)pyrimidine + H(+) = thiamine phosphate + diphosphate. The catalysed reaction is 4-amino-5-hydroxymethyl-2-methylpyrimidine + ATP = 4-amino-2-methyl-5-(phosphooxymethyl)pyrimidine + ADP + H(+). It carries out the reaction 4-amino-2-methyl-5-(phosphooxymethyl)pyrimidine + ATP = 4-amino-2-methyl-5-(diphosphooxymethyl)pyrimidine + ADP. It participates in cofactor biosynthesis; thiamine diphosphate biosynthesis; 4-amino-2-methyl-5-diphosphomethylpyrimidine from 5-amino-1-(5-phospho-D-ribosyl)imidazole: step 3/3. The protein operates within cofactor biosynthesis; thiamine diphosphate biosynthesis; thiamine phosphate from 4-amino-2-methyl-5-diphosphomethylpyrimidine and 4-methyl-5-(2-phosphoethyl)-thiazole: step 1/1. Its function is as follows. Condenses 4-methyl-5-(beta-hydroxyethyl)thiazole monophosphate (THZ-P) and 2-methyl-4-amino-5-hydroxymethyl pyrimidine pyrophosphate (HMP-PP) to form thiamine monophosphate (TMP). In terms of biological role, catalyzes the phosphorylation of hydroxymethylpyrimidine phosphate (HMP-P) to HMP-PP, and of HMP to HMP-P. This Corynebacterium glutamicum (strain ATCC 13032 / DSM 20300 / JCM 1318 / BCRC 11384 / CCUG 27702 / LMG 3730 / NBRC 12168 / NCIMB 10025 / NRRL B-2784 / 534) protein is Thiamine biosynthesis multifunctional protein ThiED (theD).